A 150-amino-acid chain; its full sequence is MKDEVALLATVTLVGVLLQAYFSLQVISARRAFHVSPPLTSGPPEFERVFRAQVNCSEYFPLFLATLWVAGIFFHEGAAALCGLFYLFARLRYFQGYARSAQLRLTPLYASARALWLLVAMAALGLLVHFLPGTLRTALFRWLQMLLPMA.

At 1–6 (MKDEVA) the chain is on the cytoplasmic side. The chain crosses the membrane as a helical span at residues 7 to 27 (LLATVTLVGVLLQAYFSLQVI). At 28–48 (SARRAFHVSPPLTSGPPEFER) the chain is on the lumenal side. Glutathione is bound at residue Arg30. Arg31 (proton donor) is an active-site residue. Ser36 is modified (phosphoserine). Residues 49-69 (VFRAQVNCSEYFPLFLATLWV) traverse the membrane as a helical segment. Glutathione contacts are provided by residues 51-55 (RAQVN), Gln53, and 58-59 (EY). Topologically, residues 70–73 (AGIF) are cytoplasmic. A helical transmembrane segment spans residues 74 to 94 (FHEGAAALCGLFYLFARLRYF). 93–97 (YFQGY) contributes to the glutathione binding site. Over 95–104 (QGYARSAQLR) the chain is Lumenal. Residue Arg104 is the Proton acceptor of the active site. A helical transmembrane segment spans residues 105 to 124 (LTPLYASARALWLLVAMAAL). At 125-150 (GLLVHFLPGTLRTALFRWLQMLLPMA) the chain is on the cytoplasmic side.

The protein belongs to the MAPEG family. In terms of assembly, homotrimer. Interacts with ALOX5AP and ALOX5. In terms of processing, phosphorylation at Ser-36 by RPS6KB1 inhibits the leukotriene-C4 synthase activity. As to expression, widely expressed.

It is found in the nucleus outer membrane. The protein localises to the endoplasmic reticulum membrane. The protein resides in the nucleus membrane. The catalysed reaction is leukotriene C4 = leukotriene A4 + glutathione. The enzyme catalyses (13S,14S)-epoxy-(4Z,7Z,9E,11E,16Z,19Z)-docosahexaenoate + glutathione = (13R)-S-glutathionyl-(14S)-hydroxy-(4Z,7Z,9E,11E,16Z,19Z)-docosahexaenoate. It functions in the pathway lipid metabolism; leukotriene C4 biosynthesis. Its activity is regulated as follows. Inhibited by MK886. In terms of biological role, catalyzes the conjugation of leukotriene A4 with reduced glutathione (GSH) to form leukotriene C4 with high specificity. Can also catalyze the transfer of a glutathionyl group from glutathione (GSH) to 13(S),14(S)-epoxy-docosahexaenoic acid to form maresin conjugate in tissue regeneration 1 (MCTR1), a bioactive lipid mediator that possess potent anti-inflammatory and proresolving actions. The protein is Leukotriene C4 synthase (Ltc4s) of Mus musculus (Mouse).